The sequence spans 298 residues: Oligodendrocyte transcription factor 2 (298 aa).

Residues 1 to 13 (MDSDASLVSSRPS) show a composition bias toward polar residues. Disordered regions lie at residues 1–60 (MDSD…SAEL) and 79–102 (SSSSSASSASSASSKKDKKQMTEP). A compositionally biased stretch (gly residues) spans 26–41 (NKGGGGGGGGGGGFTG). Residues 79-91 (SSSSSASSASSAS) are compositionally biased toward low complexity. The 55-residue stretch at 106-160 (QLRLKINSRERKRMHDLNIAMDGLREVMPYAHGPSVRKLSKIATLLLARNYILML) folds into the bHLH domain.

The protein resides in the nucleus. Required for oligodendrocyte and motor neuron specification in the spinal cord. The protein is Oligodendrocyte transcription factor 2 (OLIG2) of Gallus gallus (Chicken).